The sequence spans 106 residues: MNDSEFHRLADALWLTIEERLDSWDGDSDIDCEINGGVLTLSFENGSKIIINRQEPLHQVWLATKQGGYHFDLKGDEWICDRSGETFWELLEQAATQQAGEKVSFR.

This sequence belongs to the frataxin family.

Involved in iron-sulfur (Fe-S) cluster assembly. May act as a regulator of Fe-S biogenesis. The polypeptide is Iron-sulfur cluster assembly protein CyaY (Salmonella paratyphi B (strain ATCC BAA-1250 / SPB7)).